The following is a 102-amino-acid chain: Large ribosomal subunit protein bL21 (102 aa).

This sequence belongs to the bacterial ribosomal protein bL21 family. In terms of assembly, part of the 50S ribosomal subunit. Contacts protein L20.

In terms of biological role, this protein binds to 23S rRNA in the presence of protein L20. This chain is Large ribosomal subunit protein bL21, found in Sulfurimonas denitrificans (strain ATCC 33889 / DSM 1251) (Thiomicrospira denitrificans (strain ATCC 33889 / DSM 1251)).